The primary structure comprises 203 residues: Elongation factor Ts (203 aa).

The tract at residues 80-83 (TDFV) is involved in Mg(2+) ion dislocation from EF-Tu.

This sequence belongs to the EF-Ts family.

It is found in the cytoplasm. In terms of biological role, associates with the EF-Tu.GDP complex and induces the exchange of GDP to GTP. It remains bound to the aminoacyl-tRNA.EF-Tu.GTP complex up to the GTP hydrolysis stage on the ribosome. The polypeptide is Elongation factor Ts (Moorella thermoacetica (strain ATCC 39073 / JCM 9320)).